We begin with the raw amino-acid sequence, 335 residues long: Transmembrane protein 120B-B (335 aa).

A coiled-coil region spans residues 1–39; the sequence is MSLQKCQEEWGELEKEFQQLQETHKVYKQKLEELSSLQN. Transmembrane regions (helical) follow at residues 100–116, 130–150, 157–177, 193–213, 268–288, and 300–320; these read SLYLNLVLGNVNVTLLS, FKLYLTIILLLGAITCRFVLH, VFNFLLVWYFCTLTIRESILI, VSTFLSGVMLTWPDGLMYQMF, FLLPVLFFGHFWQLYNAMTLF, and QVFVLALTFLLLFLGNFLTTL.

The protein belongs to the TMEM120 family.

The protein resides in the nucleus inner membrane. Functionally, necessary for efficient adipogenesis. Does not show ion channel activity. The protein is Transmembrane protein 120B-B (tmem120b-b) of Xenopus laevis (African clawed frog).